The chain runs to 303 residues: Major fimbrium anchoring subunit FimB (303 aa).

An N-terminal signal peptide occupies residues 1–22; it reads MNDAKKYIVSVLILLVAGMFGG. Cysteine 23 is lipidated: N-palmitoyl cysteine. Cysteine 23 carries S-diacylglycerol cysteine lipidation.

The protein belongs to the bacteroidetes fimbrillin superfamily. FimB/Mfa2 family. As to quaternary structure, fimB is not part of the fimbrium itself, but anchors the fimbrium in the outer membrane. Linear, head-to-tail oligomerization of fimbrial subunits mediates assembly of the fimbrium stalk, while the minor components FimC, FimD and FimE probably form the fimbrium tip. The anchoring subunit FimB limits fimbrium length and is important for solid fimbrium attachment to the outer membrane. In its absence, the major fimbriae become very long and are easily detached from the membrane.

The protein resides in the cell outer membrane. In terms of biological role, anchoring subunit of the major fimbriae. Regulates fimbrial length. These filamentous pili are attached to the cell surface; they mediate biofilm formation, adhesion onto host cells and onto other bacteria that are part of the oral microbiome. Fimbriae of P.gingivalis are major virulence factors. The sequence is that of Major fimbrium anchoring subunit FimB from Porphyromonas gingivalis (strain ATCC 33277 / DSM 20709 / CIP 103683 / JCM 12257 / NCTC 11834 / 2561).